The primary structure comprises 343 residues: Dual oxidase maturation factor 1 (343 aa).

Topologically, residues 1–24 (MATLGHTFPFYAGPKPTFPMDTTL) are extracellular. Residues 25 to 45 (ASIIMIFLTALATFIVILPGI) form a helical membrane-spanning segment. Residues 46–51 (RGKTRL) lie on the Cytoplasmic side of the membrane. The helical transmembrane segment at 52–72 (FWLLRVVTSLFIGAAILAVNF) threads the bilayer. Residues 73-183 (SSEWSVGQVS…RLAGHYTSAM (111 aa)) are Extracellular-facing. 3 N-linked (GlcNAc...) asparagine glycosylation sites follow: N84, N109, and N121. Residues 184 to 204 (LWVAFLCWLLANVMLSMPVLV) form a helical membrane-spanning segment. Topologically, residues 205–206 (YG) are cytoplasmic. The chain crosses the membrane as a helical span at residues 207–227 (GYMLLATGIFQLLALLFFSMA). Topologically, residues 228 to 249 (TSLTSPCPLHLGASVLHTHHGP) are extracellular. The helical transmembrane segment at 250 to 270 (AFWITLTTGLLCVLLGLAMAV) threads the bilayer. Residues 271 to 343 (AHRMQPHRLK…AHPKDPDCAL (73 aa)) are Cytoplasmic-facing. Residues 306–343 (RYRSMADSPKSQDIPLSEASSTKAYCKEAHPKDPDCAL) are disordered. Basic and acidic residues predominate over residues 330–343 (YCKEAHPKDPDCAL).

Belongs to the DUOXA family. May interact with NUMB. In terms of tissue distribution, specifically expressed in thyroid gland. Also detected in esophagus.

It is found in the membrane. In terms of biological role, may be required for the maturation and the transport from the endoplasmic reticulum to the plasma membrane of functional DUOX1. The chain is Dual oxidase maturation factor 1 (DUOXA1) from Homo sapiens (Human).